A 130-amino-acid polypeptide reads, in one-letter code: Holo-[acyl-carrier-protein] synthase (130 aa).

Mg(2+)-binding residues include aspartate 9 and glutamate 58.

It belongs to the P-Pant transferase superfamily. AcpS family. Mg(2+) is required as a cofactor.

It is found in the cytoplasm. It catalyses the reaction apo-[ACP] + CoA = holo-[ACP] + adenosine 3',5'-bisphosphate + H(+). Functionally, transfers the 4'-phosphopantetheine moiety from coenzyme A to a Ser of acyl-carrier-protein. The polypeptide is Holo-[acyl-carrier-protein] synthase (Mycobacterium leprae (strain Br4923)).